The primary structure comprises 315 residues: FAD-linked oxidoreductase sthB (315 aa).

Residues 19–201 (QPCSLGNYVS…LSMTSRVHAD (183 aa)) enclose the FAD-binding PCMH-type domain.

The protein belongs to the oxygen-dependent FAD-linked oxidoreductase family.

It catalyses the reaction betaenone C = betaenone A. The enzyme catalyses stemphyloxin I = stemphyloxin II. Its pathway is mycotoxin biosynthesis. In terms of biological role, FAD-linked oxidoreductase; part of the gene cluster that mediates the biosynthesis of the phytotoxin stemphyloxin II. The first step of the pathway is the synthesis of dehydroprobetaenone I by the polyketide synthase sthA and the enoyl reductase sthE via condensation of one acetyl-CoA starter unit with 7 malonyl-CoA units and 5 methylations. The C-terminal reductase (R) domain of sthA catalyzes the reductive release of the polyketide chain. Because sthA lacks a designated enoylreductase (ER) domain, the required activity is provided the enoyl reductase sthE. The short-chain dehydrogenase/reductase sthC then catalyzes reduction of dehydroprobetaenone I to probetaenone I. The cytochrome P450 monooxygenase sthF catalyzes successive epoxidation, oxidation (resulting from epoxide opening) and hydroxylation to install a tertiary alcohol in the decaline ring to yield betaenone C from dehydroprobetaenone I and betaenone B from probetaenone I. The FAD-linked oxidoreductase sthB is responsible for the conversion of betaenone C to betaenone A via an intramolecular aldol reaction between C-1 and C-17 to form the bridged tricyclic system in betaenone A. Finally, the cytochrome P450 monooxygenase sthD catalyzes the hydroxylation of C-15 to afford the final metabolite stemphyloxin II. The polypeptide is FAD-linked oxidoreductase sthB (Phaeosphaeria nodorum (strain SN15 / ATCC MYA-4574 / FGSC 10173) (Glume blotch fungus)).